The primary structure comprises 279 residues: HTH-type transcriptional regulator HdfR (279 aa).

The 58-residue stretch at 1–58 (MDTELLKTFLEVSRTRHFGRAAESLYLTQSAVSFRIRQLENQLGVNLFTRHRNNIRLT) folds into the HTH lysR-type domain. The segment at residues 18–37 (FGRAAESLYLTQSAVSFRIR) is a DNA-binding region (H-T-H motif).

The protein belongs to the LysR transcriptional regulatory family.

Its function is as follows. Negatively regulates the transcription of the flagellar master operon flhDC by binding to the upstream region of the operon. The chain is HTH-type transcriptional regulator HdfR from Escherichia fergusonii (strain ATCC 35469 / DSM 13698 / CCUG 18766 / IAM 14443 / JCM 21226 / LMG 7866 / NBRC 102419 / NCTC 12128 / CDC 0568-73).